A 227-amino-acid polypeptide reads, in one-letter code: Ribonuclease 3 (227 aa).

The 123-residue stretch at 5-127 folds into the RNase III domain; it reads YQKLSRRIGY…IIGAMYLDAG (123 aa). A Mg(2+)-binding site is contributed by E40. D44 is an active-site residue. Residues D113 and E116 each coordinate Mg(2+). E116 is an active-site residue. One can recognise a DRBM domain in the interval 154-224; that stretch reads DAKTRLQEFL…AAKALKKLEK (71 aa).

It belongs to the ribonuclease III family. Homodimer. The cofactor is Mg(2+).

Its subcellular location is the cytoplasm. It carries out the reaction Endonucleolytic cleavage to 5'-phosphomonoester.. Functionally, digests double-stranded RNA. Involved in the processing of primary rRNA transcript to yield the immediate precursors to the large and small rRNAs (23S and 16S). Processes some mRNAs, and tRNAs when they are encoded in the rRNA operon. Processes pre-crRNA and tracrRNA of type II CRISPR loci if present in the organism. In Marinomonas sp. (strain MWYL1), this protein is Ribonuclease 3.